The chain runs to 267 residues: Heme-containing CO-sensing transcriptional regulator RcoM 2 (267 aa).

One can recognise a PAS domain in the interval arginine 15 to leucine 86. The heme site is built by histidine 74 and methionine 104. An HTH LytTR-type domain is found at isoleucine 161–valine 266.

Heme is required as a cofactor.

It is found in the cytoplasm. One-component, b-type heme-containing aerobic sensor and transcriptional regulator that responds to CO by activating the expression of the oxidation operon cox. The sequence is that of Heme-containing CO-sensing transcriptional regulator RcoM 2 (rcoM2) from Paraburkholderia xenovorans (strain LB400).